The primary structure comprises 133 residues: Small ribosomal subunit protein uS8 (133 aa).

This sequence belongs to the universal ribosomal protein uS8 family. In terms of assembly, part of the 30S ribosomal subunit. Contacts proteins S5 and S12.

One of the primary rRNA binding proteins, it binds directly to 16S rRNA central domain where it helps coordinate assembly of the platform of the 30S subunit. This Crocosphaera subtropica (strain ATCC 51142 / BH68) (Cyanothece sp. (strain ATCC 51142)) protein is Small ribosomal subunit protein uS8.